Here is a 241-residue protein sequence, read N- to C-terminus: UDP-2,3-diacylglucosamine hydrolase (241 aa).

D9, H11, D42, N79, and H114 together coordinate Mn(2+). A substrate-binding site is contributed by 79 to 80 (NR). Positions 122, 160, 164, 167, and 195 each coordinate substrate. Mn(2+) is bound by residues H195 and H197.

The protein belongs to the LpxH family. The cofactor is Mn(2+).

It is found in the cell inner membrane. It carries out the reaction UDP-2-N,3-O-bis[(3R)-3-hydroxytetradecanoyl]-alpha-D-glucosamine + H2O = 2-N,3-O-bis[(3R)-3-hydroxytetradecanoyl]-alpha-D-glucosaminyl 1-phosphate + UMP + 2 H(+). Its pathway is glycolipid biosynthesis; lipid IV(A) biosynthesis; lipid IV(A) from (3R)-3-hydroxytetradecanoyl-[acyl-carrier-protein] and UDP-N-acetyl-alpha-D-glucosamine: step 4/6. In terms of biological role, hydrolyzes the pyrophosphate bond of UDP-2,3-diacylglucosamine to yield 2,3-diacylglucosamine 1-phosphate (lipid X) and UMP by catalyzing the attack of water at the alpha-P atom. Involved in the biosynthesis of lipid A, a phosphorylated glycolipid that anchors the lipopolysaccharide to the outer membrane of the cell. The sequence is that of UDP-2,3-diacylglucosamine hydrolase from Shewanella frigidimarina (strain NCIMB 400).